The following is a 198-amino-acid chain: FMN-dependent NADH:quinone oxidoreductase (198 aa).

FMN contacts are provided by residues S10, 16 to 18 (SQS), 94 to 97 (MYNF), and 138 to 141 (TRGG).

The protein belongs to the azoreductase type 1 family. Homodimer. The cofactor is FMN.

It carries out the reaction 2 a quinone + NADH + H(+) = 2 a 1,4-benzosemiquinone + NAD(+). The enzyme catalyses N,N-dimethyl-1,4-phenylenediamine + anthranilate + 2 NAD(+) = 2-(4-dimethylaminophenyl)diazenylbenzoate + 2 NADH + 2 H(+). Its function is as follows. Quinone reductase that provides resistance to thiol-specific stress caused by electrophilic quinones. Functionally, also exhibits azoreductase activity. Catalyzes the reductive cleavage of the azo bond in aromatic azo compounds to the corresponding amines. This chain is FMN-dependent NADH:quinone oxidoreductase, found in Shewanella sp. (strain ANA-3).